The following is a 90-amino-acid chain: Movement protein (90 aa).

Residues 32-52 (FVFVTFGLLIAVGVAWLAYTL) traverse the membrane as a helical segment.

The protein belongs to the mastrevirus movement protein family. As to quaternary structure, interacts with the capsid protein (CP). Part of a MP-CP-viral DNA complex.

Its subcellular location is the host membrane. Functionally, involved in the viral transport within, and between cells. This chain is Movement protein, found in Wheat dwarf virus (isolate Sweden) (WDV).